A 214-amino-acid polypeptide reads, in one-letter code: ATP phosphoribosyltransferase (214 aa).

The protein belongs to the ATP phosphoribosyltransferase family. Short subfamily. As to quaternary structure, heteromultimer composed of HisG and HisZ subunits.

The protein localises to the cytoplasm. It carries out the reaction 1-(5-phospho-beta-D-ribosyl)-ATP + diphosphate = 5-phospho-alpha-D-ribose 1-diphosphate + ATP. Its pathway is amino-acid biosynthesis; L-histidine biosynthesis; L-histidine from 5-phospho-alpha-D-ribose 1-diphosphate: step 1/9. Functionally, catalyzes the condensation of ATP and 5-phosphoribose 1-diphosphate to form N'-(5'-phosphoribosyl)-ATP (PR-ATP). Has a crucial role in the pathway because the rate of histidine biosynthesis seems to be controlled primarily by regulation of HisG enzymatic activity. In Streptococcus sanguinis (strain SK36), this protein is ATP phosphoribosyltransferase.